Consider the following 216-residue polypeptide: uncharacterized protein (216 aa).

Residues 125–176 (YPKSTNFDSHYHDCDEYWVIIEGAGTVVVGSRSFEVEVGDCVAIGMGHHHDL) enclose the Cupin type-2 domain.

This is an uncharacterized protein from Sinorhizobium fredii (strain NBRC 101917 / NGR234).